The sequence spans 65 residues: uncharacterized protein (65 aa).

Helical transmembrane passes span 4-24 (TIWL…MLYP) and 45-65 (FGGG…KTIG).

The protein resides in the cell membrane. This is an uncharacterized protein from Escherichia coli O157:H7.